The chain runs to 562 residues: Arginine--tRNA ligase (562 aa).

A 'HIGH' region motif is present at residues proline 122–histidine 132.

It belongs to the class-I aminoacyl-tRNA synthetase family. Monomer.

It is found in the cytoplasm. The catalysed reaction is tRNA(Arg) + L-arginine + ATP = L-arginyl-tRNA(Arg) + AMP + diphosphate. The protein is Arginine--tRNA ligase of Chlamydia felis (strain Fe/C-56) (Chlamydophila felis).